Consider the following 330-residue polypeptide: UPF0353 protein MAP_3434 (330 aa).

2 consecutive transmembrane segments (helical) span residues 21-41 and 63-83; these read GMLLFGLVPLALLALYLVVQA and LPIAVSLLSLVLLTIALATPT. Residues 94 to 289 form the VWFA domain; sequence VIMLVIDMSQ…GELQKSYNAI (196 aa). The helical transmembrane segment at 304-324 threads the bilayer; the sequence is AGWLRLGVLTALIATALALLI.

The protein belongs to the UPF0353 family.

It localises to the cell membrane. In Mycolicibacterium paratuberculosis (strain ATCC BAA-968 / K-10) (Mycobacterium paratuberculosis), this protein is UPF0353 protein MAP_3434.